The primary structure comprises 268 residues: MAVGKNKGLSKGGKKGGKKKVVDPFSRKDWYDVKAPNMFQTRQIGKTLVNRTQGQRIASDYLKGRVFEVSLADLQKDIDPERSFRKFRLIAEDVQDRNVLCNFHGMDLTTDKYRSMVKKWQTLIEAIVEAKTVDGYLLRVFCIGFTAKDQQSQRKTCYAQQSQVRKIRARMTDIITNEVSGADLKQLVNKLALDSIAKDIEKSCQRIYPLHDVYIRKVKVLKKPRFDVSKLLELHGDGGGKTTEAVVSAEGAVVDRPEGYEPPVQEAV.

Residues 1–21 (MAVGKNKGLSKGGKKGGKKKV) form a disordered region.

It belongs to the eukaryotic ribosomal protein eS1 family. As to quaternary structure, component of the small ribosomal subunit. Mature ribosomes consist of a small (40S) and a large (60S) subunit. The 40S subunit contains about 33 different proteins and 1 molecule of RNA (18S). The 60S subunit contains about 49 different proteins and 3 molecules of RNA (28S, 5.8S and 5S).

Its subcellular location is the cytoplasm. Functionally, essential for oogenesis; required for late follicle cell development. In Drosophila persimilis (Fruit fly), this protein is Small ribosomal subunit protein eS1.